A 239-amino-acid chain; its full sequence is Protein GrpE (239 aa).

Disordered regions lie at residues 1–53 (MIEE…EDLK) and 210–239 (GPGQQISQESEEKDKVDKDIDSEGSISEEN). Composition is skewed to basic and acidic residues over residues 34–53 (NEDKKLPDDNNEKIDAEDLK) and 219–230 (SEEKDKVDKDID).

The protein belongs to the GrpE family. As to quaternary structure, homodimer.

The protein localises to the cytoplasm. Functionally, participates actively in the response to hyperosmotic and heat shock by preventing the aggregation of stress-denatured proteins, in association with DnaK and GrpE. It is the nucleotide exchange factor for DnaK and may function as a thermosensor. Unfolded proteins bind initially to DnaJ; upon interaction with the DnaJ-bound protein, DnaK hydrolyzes its bound ATP, resulting in the formation of a stable complex. GrpE releases ADP from DnaK; ATP binding to DnaK triggers the release of the substrate protein, thus completing the reaction cycle. Several rounds of ATP-dependent interactions between DnaJ, DnaK and GrpE are required for fully efficient folding. In Prochlorococcus marinus (strain MIT 9515), this protein is Protein GrpE.